We begin with the raw amino-acid sequence, 1068 residues long: Ubiquitin-protein ligase E3B (1068 aa).

At Met-1 the chain carries N-acetylmethionine. One can recognise an IQ domain in the interval 29 to 58 (RERAAVVIQAHVRSFLCRSRLQRDIRREID). Position 419 is a phosphoserine (Ser-419). Residues 702-1068 (SQHAMKGVIR…ISMNTGFELS (367 aa)) form the HECT domain. Cys-1036 acts as the Glycyl thioester intermediate in catalysis.

Widely expressed.

It is found in the postsynaptic density. The catalysed reaction is S-ubiquitinyl-[E2 ubiquitin-conjugating enzyme]-L-cysteine + [acceptor protein]-L-lysine = [E2 ubiquitin-conjugating enzyme]-L-cysteine + N(6)-ubiquitinyl-[acceptor protein]-L-lysine.. It participates in protein modification; protein ubiquitination. E3 ubiquitin-protein ligase which accepts ubiquitin from an E2 ubiquitin-conjugating enzyme in the form of a thioester and then directly transfers the ubiquitin to targeted substrates. Ubiquitinates BCKDK and targets it for degradation, thereby regulating various metabolic processes. Involved in the positive regulation of neurite branching in hippocampal neurons and the control of neuronal spine number and morphology, through the ubiquitination of PPP3CC. In Homo sapiens (Human), this protein is Ubiquitin-protein ligase E3B (UBE3B).